Here is a 500-residue protein sequence, read N- to C-terminus: Glycerol kinase (500 aa).

Thr13 is a binding site for ADP. Positions 13, 14, and 15 each coordinate ATP. Thr13 contributes to the sn-glycerol 3-phosphate binding site. Arg17 provides a ligand contact to ADP. 4 residues coordinate sn-glycerol 3-phosphate: Arg83, Glu84, Tyr135, and Asp245. Positions 83, 84, 135, 245, and 246 each coordinate glycerol. The ADP site is built by Thr267 and Gly310. 4 residues coordinate ATP: Thr267, Gly310, Gln314, and Gly411. The ADP site is built by Gly411 and Asn415.

Belongs to the FGGY kinase family. As to quaternary structure, homotetramer and homodimer (in equilibrium).

It carries out the reaction glycerol + ATP = sn-glycerol 3-phosphate + ADP + H(+). The protein operates within polyol metabolism; glycerol degradation via glycerol kinase pathway; sn-glycerol 3-phosphate from glycerol: step 1/1. Its activity is regulated as follows. Activated by phosphorylation and inhibited by fructose 1,6-bisphosphate (FBP). Its function is as follows. Key enzyme in the regulation of glycerol uptake and metabolism. Catalyzes the phosphorylation of glycerol to yield sn-glycerol 3-phosphate. The protein is Glycerol kinase of Carboxydothermus hydrogenoformans (strain ATCC BAA-161 / DSM 6008 / Z-2901).